Reading from the N-terminus, the 889-residue chain is Protein translocase subunit SecA (889 aa).

Residues Q87, G105 to T109, and D494 each bind ATP. Residues E823–R889 form a disordered region. Positions P867–R889 are enriched in basic and acidic residues.

It belongs to the SecA family. As to quaternary structure, monomer and homodimer. Part of the essential Sec protein translocation apparatus which comprises SecA, SecYEG and auxiliary proteins SecDF-YajC and YidC.

Its subcellular location is the cell inner membrane. The protein localises to the cytoplasm. It carries out the reaction ATP + H2O + cellular proteinSide 1 = ADP + phosphate + cellular proteinSide 2.. In terms of biological role, part of the Sec protein translocase complex. Interacts with the SecYEG preprotein conducting channel. Has a central role in coupling the hydrolysis of ATP to the transfer of proteins into and across the cell membrane, serving as an ATP-driven molecular motor driving the stepwise translocation of polypeptide chains across the membrane. The chain is Protein translocase subunit SecA from Bdellovibrio bacteriovorus (strain ATCC 15356 / DSM 50701 / NCIMB 9529 / HD100).